The sequence spans 414 residues: Cytochrome c-554 (414 aa).

An N-terminal signal peptide occupies residues 1–24; the sequence is MQSSRPSDRQLAIVVSVAVGIVVA. Heme is bound by residues methionine 110, cysteine 131, cysteine 134, histidine 135, methionine 154, cysteine 179, cysteine 182, histidine 183, methionine 283, cysteine 294, cysteine 297, histidine 298, cysteine 378, cysteine 381, and histidine 382.

Post-translationally, binds 4 heme groups per subunit. The N-terminus is blocked.

It is found in the periplasm. In terms of biological role, serves as the immediate electron donor to the oxidized BChl2 (bacteriochlorophyll dimer) that is oxidized in the first step of light-induced charge separation. Can also oxidize low-potential substrates. The polypeptide is Cytochrome c-554 (puf2C) (Chloroflexus aurantiacus (strain ATCC 29366 / DSM 635 / J-10-fl)).